A 312-amino-acid chain; its full sequence is DNA primase small subunit PriS (312 aa).

Catalysis depends on residues D88, D90, and D215.

The protein belongs to the eukaryotic-type primase small subunit family. In terms of assembly, heterodimer of a small subunit (PriS) and a large subunit (PriL). Requires Mg(2+) as cofactor. The cofactor is Mn(2+).

Functionally, catalytic subunit of DNA primase, an RNA polymerase that catalyzes the synthesis of short RNA molecules used as primers for DNA polymerase during DNA replication. The small subunit contains the primase catalytic core and has DNA synthesis activity on its own. Binding to the large subunit stabilizes and modulates the activity, increasing the rate of DNA synthesis while decreasing the length of the DNA fragments, and conferring RNA synthesis capability. The DNA polymerase activity may enable DNA primase to also catalyze primer extension after primer synthesis. May also play a role in DNA repair. This Pyrobaculum aerophilum (strain ATCC 51768 / DSM 7523 / JCM 9630 / CIP 104966 / NBRC 100827 / IM2) protein is DNA primase small subunit PriS.